The following is a 246-amino-acid chain: Small ribosomal subunit protein uS2 (246 aa).

It belongs to the universal ribosomal protein uS2 family.

The sequence is that of Small ribosomal subunit protein uS2 from Stutzerimonas stutzeri (strain A1501) (Pseudomonas stutzeri).